Reading from the N-terminus, the 154-residue chain is Large ribosomal subunit protein uL13 (154 aa).

It belongs to the universal ribosomal protein uL13 family. In terms of assembly, part of the 50S ribosomal subunit.

This protein is one of the early assembly proteins of the 50S ribosomal subunit, although it is not seen to bind rRNA by itself. It is important during the early stages of 50S assembly. This Rhizobium johnstonii (strain DSM 114642 / LMG 32736 / 3841) (Rhizobium leguminosarum bv. viciae) protein is Large ribosomal subunit protein uL13.